Reading from the N-terminus, the 213-residue chain is Orotate phosphoribosyltransferase (213 aa).

Lysine 26 serves as a coordination point for 5-phospho-alpha-D-ribose 1-diphosphate. 34-35 (FF) contributes to the orotate binding site. Residues 72–73 (YK), arginine 99, lysine 100, lysine 103, histidine 105, and 124–132 (DDVITAGTA) contribute to the 5-phospho-alpha-D-ribose 1-diphosphate site. Residues threonine 128 and arginine 156 each coordinate orotate.

Belongs to the purine/pyrimidine phosphoribosyltransferase family. PyrE subfamily. Homodimer. It depends on Mg(2+) as a cofactor.

It catalyses the reaction orotidine 5'-phosphate + diphosphate = orotate + 5-phospho-alpha-D-ribose 1-diphosphate. It participates in pyrimidine metabolism; UMP biosynthesis via de novo pathway; UMP from orotate: step 1/2. Its function is as follows. Catalyzes the transfer of a ribosyl phosphate group from 5-phosphoribose 1-diphosphate to orotate, leading to the formation of orotidine monophosphate (OMP). The chain is Orotate phosphoribosyltransferase from Escherichia coli O45:K1 (strain S88 / ExPEC).